Here is a 150-residue protein sequence, read N- to C-terminus: Single-stranded DNA-binding protein rim1, mitochondrial (150 aa).

The N-terminal 22 residues, 1 to 22 (MLFLKSSRAFSKRLFSSSTVRY), are a transit peptide targeting the mitochondrion. Residues 25–125 (IQRLTLTGNL…HVSADVLFYP (101 aa)) form the SSB domain. Residues 127–150 (NKNGDESGEETHPELDADPMINSF) are disordered. The segment covering 128-141 (KNGDESGEETHPEL) has biased composition (basic and acidic residues).

The protein resides in the mitochondrion. In terms of biological role, this protein binds preferentially and cooperatively to ss-DNA. Involved in mitochondrial DNA replication. The protein is Single-stranded DNA-binding protein rim1, mitochondrial (rim1) of Schizosaccharomyces pombe (strain 972 / ATCC 24843) (Fission yeast).